A 119-amino-acid chain; its full sequence is Membrane-anchored ubiquitin-fold protein 3 (119 aa).

A Ubiquitin-like domain is found at 8-76 (IEVKFRLFDG…NNRTLAESRV (69 aa)). The residue at position 116 (cysteine 116) is a Cysteine methyl ester. Cysteine 116 carries the S-geranylgeranyl cysteine lipid modification. A propeptide spans 117–119 (TIL) (removed in mature form).

The protein localises to the cell membrane. May serve as docking site to facilitate the association of other proteins to the plasma membrane. This chain is Membrane-anchored ubiquitin-fold protein 3 (MUB3), found in Oryza sativa subsp. japonica (Rice).